Reading from the N-terminus, the 578-residue chain is Translation initiation factor eIF2B subunit gamma (578 aa).

A phosphoserine mark is found at Ser296 and Ser300. 2 disordered regions span residues 298 to 337 and 535 to 578; these read QASF…SATS and DDSV…LFER. Thr306 carries the phosphothreonine modification. Positions 544–578 are enriched in acidic residues; that stretch reads EIAEETDSDDRSDEDSDDSEYTDEYEYEDDGLFER.

Belongs to the eIF-2B gamma/epsilon subunits family. In terms of assembly, component of the translation initiation factor 2B (eIF2B) complex which is a heterodecamer of two sets of five different subunits: alpha, beta, gamma, delta and epsilon. Subunits alpha, beta and delta comprise a regulatory subcomplex and subunits epsilon and gamma comprise a catalytic subcomplex. Within the complex, the hexameric regulatory complex resides at the center, with the two heterodimeric catalytic subcomplexes bound on opposite sides.

It is found in the cytoplasm. The protein resides in the cytosol. In terms of biological role, acts as a component of the translation initiation factor 2B (eIF2B) complex, which catalyzes the exchange of GDP for GTP on the eukaryotic initiation factor 2 (eIF2) complex gamma subunit. Its guanine nucleotide exchange factor activity is repressed when bound to eIF2 complex phosphorylated on the alpha subunit, thereby limiting the amount of methionyl-initiator methionine tRNA available to the ribosome and consequently global translation is repressed. It activates the synthesis of GCN4 in yeast under amino acid starvation conditions by suppressing the inhibitory effects of multiple AUG codons present in the leader of GCN4 mRNA. It may promote either repression or activation of GCN4 expression depending on amino acid availability. GCD1 stabilizes the interaction between eIF2 and GCD6 and stimulates the catalytic activity in vitro. The polypeptide is Translation initiation factor eIF2B subunit gamma (GCD1) (Saccharomyces cerevisiae (strain ATCC 204508 / S288c) (Baker's yeast)).